Reading from the N-terminus, the 185-residue chain is Probable chorismate pyruvate-lyase 1 (185 aa).

Substrate contacts are provided by R68, L106, and E164.

This sequence belongs to the UbiC family.

The protein localises to the cytoplasm. The enzyme catalyses chorismate = 4-hydroxybenzoate + pyruvate. It participates in cofactor biosynthesis; ubiquinone biosynthesis. Its function is as follows. Removes the pyruvyl group from chorismate, with concomitant aromatization of the ring, to provide 4-hydroxybenzoate (4HB) for the ubiquinone pathway. This is Probable chorismate pyruvate-lyase 1 from Pseudomonas entomophila (strain L48).